We begin with the raw amino-acid sequence, 1109 residues long: Hybrid signal transduction histidine kinase F (1109 aa).

Residues Leu237–Glu289 form the PAC domain. Positions Thr324 to Gln547 constitute a Histidine kinase domain. His327 carries the post-translational modification Phosphohistidine; by autocatalysis. Positions Ser719–Val760 form a coiled coil. Residues Leu739–Gln758 are compositionally biased toward low complexity. Residues Leu739–Glu819 are disordered. Over residues Asp767 to Tyr782 the composition is skewed to basic and acidic residues. The 121-residue stretch at Arg928–Leu1048 folds into the Response regulatory domain. Asp977 carries the 4-aspartylphosphate modification. Residues Asn1052–Asn1099 are compositionally biased toward low complexity. Positions Asn1052–Ile1109 are disordered. The span at Tyr1100–Ile1109 shows a compositional bias: polar residues.

It carries out the reaction ATP + protein L-histidine = ADP + protein N-phospho-L-histidine.. In terms of biological role, acts as a receptor histidine kinase for a signal transduction pathway. This protein undergoes an ATP-dependent autophosphorylation at a conserved histidine residue in the kinase core, and a phosphoryl group is then transferred to a conserved aspartate residue in the receiver domain. This chain is Hybrid signal transduction histidine kinase F (dhkF), found in Dictyostelium discoideum (Social amoeba).